Consider the following 161-residue polypeptide: Regulatory protein RecX (161 aa).

The protein belongs to the RecX family.

Its subcellular location is the cytoplasm. Its function is as follows. Modulates RecA activity. This chain is Regulatory protein RecX, found in Thermotoga petrophila (strain ATCC BAA-488 / DSM 13995 / JCM 10881 / RKU-1).